Reading from the N-terminus, the 267-residue chain is 2-keto-3-deoxy-L-rhamnonate aldolase (267 aa).

His-49 (proton acceptor) is an active-site residue. Position 151 (Gln-151) interacts with substrate. Glu-153 lines the Mg(2+) pocket. 2 residues coordinate substrate: Ala-178 and Asp-179. Mg(2+) is bound at residue Asp-179.

It belongs to the HpcH/HpaI aldolase family. KDR aldolase subfamily. In terms of assembly, homohexamer. Mg(2+) serves as cofactor.

It catalyses the reaction 2-dehydro-3-deoxy-L-rhamnonate = (S)-lactaldehyde + pyruvate. Catalyzes the reversible retro-aldol cleavage of 2-keto-3-deoxy-L-rhamnonate (KDR) to pyruvate and lactaldehyde. The sequence is that of 2-keto-3-deoxy-L-rhamnonate aldolase from Shigella dysenteriae serotype 1 (strain Sd197).